Consider the following 30-residue polypeptide: Brevinin-2Rg (30 aa).

A disulfide bond links Cys24 and Cys30.

Expressed by the skin glands.

Its subcellular location is the secreted. Functionally, antimicrobial peptide. The sequence is that of Brevinin-2Rg from Pelophylax ridibundus (Marsh frog).